The following is a 136-amino-acid chain: Large-conductance mechanosensitive channel (136 aa).

Residues 1-16 are Cytoplasmic-facing; sequence MGLLSEFKAFAVKGNV. Residues 17 to 45 form a helical membrane-spanning segment; it reads VDMAVGIIIGAAFGKIVSSFVGDVIMPPI. Residues 46 to 73 are Extracellular-facing; the sequence is GLLIGGVDFSDLAITLKAEGDVPAVVLA. Residues 74–93 traverse the membrane as a helical segment; that stretch reads YRKFIQTVLNFVIVAFAIFM. Topologically, residues 94 to 136 are cytoplasmic; that stretch reads GVKAINRLKREEAVAPSEPPVPSAEETLLTEIRDLLKAQQNKS.

It belongs to the MscL family. As to quaternary structure, homopentamer.

It localises to the cell inner membrane. In terms of biological role, channel that opens in response to stretch forces in the membrane lipid bilayer. Forms a nonselective ion channel with a conductance of about 4 nanosiemens. May participate in the regulation of osmotic pressure changes within the cell. This Pseudomonas fluorescens protein is Large-conductance mechanosensitive channel.